The sequence spans 609 residues: MLSRKRKHGSPDAESNPSKKQITSLRSSPRRTTRQKENIPISLNSPQKIPSTPKKTQRAFLLESPPKRVSPRKAVLGAGTFYSKQKPLYLTPLERKVLKEAKSPPSVTNKEPSRPPLTAANQVVKPAKKVQKKPRASAPQSNLKGYFTAKPKATKSSSDKQTDQVLKSTMAPISFSSMKSKGKPKLVVGAAFFNTGKKPTSMYKKSAQNTKPKPTYEKPSIRKPVREKELVTAPGQRSPVRRAVFLKKQPEVEVSHDKRESTQAPMSPQVLADVHGITKELRVVLRRSVSPETGSQDAPSEADSVFDVSDLLLPDHDSSHDEEESSVYPIFGTKRPQKKGKLSPPLNSSTPSALTATPALKAKERSMLRREMKKQTDNQLIIDAGQKQFGATTCASCGMLYSTDSPEDNFQHTQFHQRFLDTIKFVGWKKERVVAEFWDGKIILVLPDDPKYATRKAEDVRRIADSELGFQQITLSSPSSAKTYLFINTDRMVVGCLVAENIRQAYRVLEQQEKQKDMSKEDFMEHHRTWCCSTVPEKALCGVSRIWVFSLMRRKSVATRLLDTARNTFMYGSHLTKEEIAFSDPTPQGKLFATKYCQTPTFLVYNFIS.

Disordered regions lie at residues 1–71 (MLSR…RVSP), 100–165 (EAKS…TDQV), 197–241 (KKPT…SPVR), and 314–357 (PDHD…LTAT). 2 stretches are compositionally biased toward polar residues: residues 13–22 (AESNPSKKQI) and 41–54 (ISLN…STPK). The segment covering 126–135 (PAKKVQKKPR) has biased composition (basic residues). Residues 214 to 230 (PTYEKPSIRKPVREKEL) show a composition bias toward basic and acidic residues. The segment covering 345-355 (PLNSSTPSALT) has biased composition (polar residues). The CCHH-type zinc finger occupies 392–416 (TTCASCGMLYSTDSPEDNFQHTQFH).

It belongs to the acetyltransferase family. ECO subfamily.

It localises to the nucleus. The protein localises to the chromosome. It catalyses the reaction L-lysyl-[protein] + acetyl-CoA = N(6)-acetyl-L-lysyl-[protein] + CoA + H(+). Functionally, acetyltransferase required for the establishment of sister chromatid cohesion. Couples the processes of cohesion and DNA replication to ensure that only sister chromatids become paired together. Essential for early development. This is N-acetyltransferase ESCO2 (esco2) from Danio rerio (Zebrafish).